A 316-amino-acid chain; its full sequence is Short-chain dehydrogenase/reductase family 16C member 6 (316 aa).

40-64 (LITGAASGLGRLLAIKFASLGAILV) serves as a coordination point for NAD(+). Ser173 is a binding site for substrate. The active-site Proton acceptor is Tyr186.

This sequence belongs to the short-chain dehydrogenases/reductases (SDR) family.

This Bos taurus (Bovine) protein is Short-chain dehydrogenase/reductase family 16C member 6 (SDR16C6).